Consider the following 125-residue polypeptide: MRHRNSGVKLGRTSSHRKAMFENLANSLFEHELIKTTLPKAKELRRVAEPLITLAKNDTVANRRLAFARTRNAATVGKLFTVLGPRYKERNGGYLRVLKAGFRAGDAAPMAYVELVDREVNTSAE.

The protein belongs to the bacterial ribosomal protein bL17 family. As to quaternary structure, part of the 50S ribosomal subunit. Contacts protein L32.

This chain is Large ribosomal subunit protein bL17, found in Acinetobacter baumannii (strain AB0057).